A 528-amino-acid polypeptide reads, in one-letter code: Probable GTP-binding protein OBGM, mitochondrial (528 aa).

A mitochondrion-targeting transit peptide spans 1-45; that stretch reads MWRRQHALLRRISLPKPPAATGIGCYYATEPEGRKPKTAPLQSRG. In terms of domain architecture, Obg spans 46–339; that stretch reads MVDRFRLRAK…TYLILELKSI (294 aa). 2 disordered regions span residues 52 to 87 and 167 to 212; these read LRAK…RGGD and HSPF…NHRG. Gly residues predominate over residues 77 to 86; sequence PDGGNGGRGG. Residues 197–207 are compositionally biased toward basic and acidic residues; that stretch reads NTAENDCERGN. Residues 340-513 form the OBG-type G domain; it reads ADVGLVGMPN…LRVGLRDLMD (174 aa). GTP is bound by residues 346-353 and 393-397; these read GMPNAGKS and DIPGL.

It belongs to the TRAFAC class OBG-HflX-like GTPase superfamily. OBG GTPase family.

The protein localises to the mitochondrion. May bind GTP and have GTPase activity. The protein is Probable GTP-binding protein OBGM, mitochondrial (OBGM) of Oryza sativa subsp. japonica (Rice).